Reading from the N-terminus, the 589-residue chain is Poly(3-hydroxyalkanoate) polymerase subunit PhaC (589 aa).

Positions 1-23 (MATGKGAAASTQEGKSQPFKVTP) are disordered. Cys319 is an active-site residue.

The protein belongs to the PHA/PHB synthase family. Type I PhaC subfamily. As to quaternary structure, monomer.

Its subcellular location is the cytoplasm. It catalyses the reaction (3R)-3-hydroxybutanoyl-CoA + [(3R)-hydroxybutanoate](n) = [(3R)-hydroxybutanoate](n+1) + CoA. The protein operates within biopolymer metabolism; poly-(R)-3-hydroxybutanoate biosynthesis. In terms of biological role, polymerizes (R)-3-hydroxybutyryl-CoA to create polyhydroxybutyrate (PHB) which consists of thousands of hydroxybutyrate molecules linked end to end. PHB serves as an intracellular energy reserve material when cells grow under conditions of nutrient limitation. This is Poly(3-hydroxyalkanoate) polymerase subunit PhaC from Cupriavidus necator (strain ATCC 17699 / DSM 428 / KCTC 22496 / NCIMB 10442 / H16 / Stanier 337) (Ralstonia eutropha).